The following is a 387-amino-acid chain: 3-ketoacyl-CoA thiolase (387 aa).

Cys91 (acyl-thioester intermediate) is an active-site residue. Active-site proton acceptor residues include His343 and Cys373.

Belongs to the thiolase-like superfamily. Thiolase family. Heterotetramer of two alpha chains (FadB) and two beta chains (FadA).

Its subcellular location is the cytoplasm. It catalyses the reaction an acyl-CoA + acetyl-CoA = a 3-oxoacyl-CoA + CoA. It participates in lipid metabolism; fatty acid beta-oxidation. In terms of biological role, catalyzes the final step of fatty acid oxidation in which acetyl-CoA is released and the CoA ester of a fatty acid two carbons shorter is formed. In Shigella flexneri serotype 5b (strain 8401), this protein is 3-ketoacyl-CoA thiolase.